We begin with the raw amino-acid sequence, 111 residues long: Rubredoxin (111 aa).

The region spanning 11–62 is the Rubredoxin-like domain; it reads LDRFECRSCGYVYEPEKGDNKHDIAPETPFAELPINWRCPVCTAKKAAFTNI. The Fe cation site is built by cysteine 16, cysteine 19, cysteine 49, and cysteine 52.

It belongs to the rubredoxin family. Fe(3+) is required as a cofactor.

Rubredoxin is a small nonheme, iron protein lacking acid-labile sulfide. Its single Fe, chelated to 4 Cys, functions as an electron acceptor and may also stabilize the conformation of the molecule. Could be involved in hydrogenase-linked redox processes. This chain is Rubredoxin (rub), found in Nostoc sp. (strain PCC 7120 / SAG 25.82 / UTEX 2576).